Reading from the N-terminus, the 395-residue chain is Probable isocitrate dehydrogenase [NAD] gamma 2, mitochondrial (395 aa).

The N-terminal 25 residues, 1-25 (MLAAGSCSVRTILQPALLLGHSREV), are a transit peptide targeting the mitochondrion. T117 is a binding site for citrate. Substrate contacts are provided by R133, R164, and D251. Residue D251 coordinates Mn(2+). ADP is bound at residue N321.

This sequence belongs to the isocitrate and isopropylmalate dehydrogenases family. Heterooligomer of subunits alpha (IDH3A), beta (IDH3B), and gamma (IDH3G) in the apparent ratio of 2:1:1. The heterodimer containing one IDH3A and one IDH3B subunit and the heterodimer containing one IDH3A and one IDH3G subunit assemble into a heterotetramer (which contains two subunits of IDH3A, one of IDH3B and one of IDH3G) and further into the heterooctamer. Requires Mg(2+) as cofactor. Mn(2+) is required as a cofactor.

Its subcellular location is the mitochondrion. The heterotetramer and the heterodimer composed of IDH3A and IDH3G subunits can be allosterically activated by citrate (CIT) or/and ADP, and the two activators can act independently or synergistically. The heterodimer composed of IDH3A and IDH3B subunits cannot be allosterically regulated and the allosteric regulation of the heterotetramer is through the IDH3G subunit and not the IDH3B subunit. The IDH3G subunit contains the allosteric site which consists of a CIT-binding site and an ADP-binding site, and the binding of CIT and ADP causes conformational changes at the allosteric site which are transmitted to the active site in the catalytic subunit (IDH3A) through a cascade of conformational changes at the heterodimer interface, leading to stabilization of the isocitrate-binding at the active site and thus activation of the enzyme. ATP can activate the heterotetramer and the heterodimer composed of IDH3A and IDH3G subunits at low concentrations but inhibits their activities at high concentrations, whereas ATP exhibits only inhibitory effect on the heterodimer composed of IDH3A and IDH3B subunits. Regulatory subunit which plays a role in the allosteric regulation of the enzyme catalyzing the decarboxylation of isocitrate (ICT) into alpha-ketoglutarate. The heterodimer composed of the alpha (IDH3A) and beta (IDH3B) subunits and the heterodimer composed of the alpha (IDH3A) and gamma (IDH3G) subunits, have considerable basal activity but the full activity of the heterotetramer (containing two subunits of IDH3A, one of IDH3B and one of IDH3G) requires the assembly and cooperative function of both heterodimers. The protein is Probable isocitrate dehydrogenase [NAD] gamma 2, mitochondrial of Rattus norvegicus (Rat).